Reading from the N-terminus, the 354-residue chain is Uroporphyrinogen decarboxylase (354 aa).

Substrate is bound by residues 27 to 31, aspartate 77, tyrosine 154, serine 209, and histidine 327; that span reads RQAGR.

The protein belongs to the uroporphyrinogen decarboxylase family. In terms of assembly, homodimer.

The protein resides in the cytoplasm. It catalyses the reaction uroporphyrinogen III + 4 H(+) = coproporphyrinogen III + 4 CO2. It functions in the pathway porphyrin-containing compound metabolism; protoporphyrin-IX biosynthesis; coproporphyrinogen-III from 5-aminolevulinate: step 4/4. Its function is as follows. Catalyzes the decarboxylation of four acetate groups of uroporphyrinogen-III to yield coproporphyrinogen-III. The polypeptide is Uroporphyrinogen decarboxylase (Shewanella baltica (strain OS185)).